The following is a 202-amino-acid chain: Large ribosomal subunit protein bL25 (202 aa).

The tract at residues glutamate 182–glutamate 202 is disordered. Residues valine 183–glutamate 202 are compositionally biased toward acidic residues.

It belongs to the bacterial ribosomal protein bL25 family. CTC subfamily. As to quaternary structure, part of the 50S ribosomal subunit; part of the 5S rRNA/L5/L18/L25 subcomplex. Contacts the 5S rRNA. Binds to the 5S rRNA independently of L5 and L18.

In terms of biological role, this is one of the proteins that binds to the 5S RNA in the ribosome where it forms part of the central protuberance. This Corynebacterium glutamicum (strain R) protein is Large ribosomal subunit protein bL25.